We begin with the raw amino-acid sequence, 513 residues long: PPE family protein PPE4 (513 aa).

3 helical membrane passes run 233–253 (IIIA…PLLF), 277–297 (FLLP…PIVL), and 309–329 (LAAA…AVTG). Disordered stretches follow at residues 395 to 446 (AAAA…ERGA) and 469 to 513 (LAGD…HDSK).

Belongs to the mycobacterial PPE family.

It localises to the cell membrane. Important for the siderophore-mediated iron-acquisition function of ESX-3. This Mycobacterium tuberculosis (strain CDC 1551 / Oshkosh) protein is PPE family protein PPE4 (PPE4).